A 449-amino-acid polypeptide reads, in one-letter code: MTEKVTKLALASRLIVLLVQLVANGALPEHKPDVFRMPVSSDQNASWIDKVIKRCLGGLRHWDGEYFLHIAENLYSYENTLAFYPLYPVVVRHVGQAVEAIGISLSQESILLVVAVALNFWLFCESANLLFQLTQVLFNDLNKSWNAALIYCFNPATIFFTAAYSETFFAYSSLHLMLECSKPTGSFRYLRLGTALAACLLCRSNGLITLGYPLYFFGRQLLLKNKEPNTCMQLTQMTLTILGAIGILHTYYFYIYRLYCLPNTRPNHPQHIVDYAVERKYLLSGQGSEGSPWCQYTLPFPYTYVQSHYWDVGFLRYYKWKQLPNFLLALPMLSFMHWHCYDYMQHLAKAVWAKLTPSGFKELIRDHTTFPFVLHAAILTLVCTVYVHIQVSTRLLASATPVFYWFAADHMPKTLAQLKLRSKAGALFVWCTTYSLVGTVLFSNNYPWT.

Topologically, residues 1-7 (MTEKVTK) are cytoplasmic. The chain crosses the membrane as a helical span at residues 8–28 (LALASRLIVLLVQLVANGALP). At 29–82 (EHKPDVFRMPVSSDQNASWIDKVIKRCLGGLRHWDGEYFLHIAENLYSYENTLA) the chain is on the lumenal side. N-linked (GlcNAc...) asparagine glycosylation is present at Asn-44. Residues 83–103 (FYPLYPVVVRHVGQAVEAIGI) traverse the membrane as a helical segment. Residues 104 to 109 (SLSQES) lie on the Cytoplasmic side of the membrane. The chain crosses the membrane as a helical span at residues 110-130 (ILLVVAVALNFWLFCESANLL). Residues 131–148 (FQLTQVLFNDLNKSWNAA) are Lumenal-facing. Asn-142 is a glycosylation site (N-linked (GlcNAc...) asparagine). The chain crosses the membrane as a helical span at residues 149–169 (LIYCFNPATIFFTAAYSETFF). Topologically, residues 170-196 (AYSSLHLMLECSKPTGSFRYLRLGTAL) are cytoplasmic. A helical transmembrane segment spans residues 197–217 (AACLLCRSNGLITLGYPLYFF). At 218–235 (GRQLLLKNKEPNTCMQLT) the chain is on the lumenal side. A helical transmembrane segment spans residues 236–256 (QMTLTILGAIGILHTYYFYIY). The Cytoplasmic segment spans residues 257–368 (RLYCLPNTRP…GFKELIRDHT (112 aa)). Residues 369 to 389 (TFPFVLHAAILTLVCTVYVHI) traverse the membrane as a helical segment. Over 390 to 423 (QVSTRLLASATPVFYWFAADHMPKTLAQLKLRSK) the chain is Lumenal. Residues 424–444 (AGALFVWCTTYSLVGTVLFSN) form a helical membrane-spanning segment. The Cytoplasmic portion of the chain corresponds to 445–449 (NYPWT).

It belongs to the PIGV family.

Its subcellular location is the endoplasmic reticulum membrane. The protein operates within glycolipid biosynthesis; glycosylphosphatidylinositol-anchor biosynthesis. Mannosyltransferase involved in glycosylphosphatidylinositol-anchor biosynthesis. Transfers the second mannose to the glycosylphosphatidylinositol during GPI precursor assembly. Required for the GPI-mediated endoplasmic reticulum exit and proper targeting to the cell surface of chp. Required for GPI-mediated membrane attachment of chp, qsm and Cont. Essential for microvillar stability in the rhabdomere. The chain is GPI mannosyltransferase 2 from Drosophila melanogaster (Fruit fly).